A 493-amino-acid polypeptide reads, in one-letter code: Angiopoietin-related protein 2 (493 aa).

The first 22 residues, 1-22, serve as a signal peptide directing secretion; sequence MRPLCVTCWWLGLLAAMGAVAG. 2 coiled-coil regions span residues 76-115 and 152-206; these read PEVL…VDGG and ALEL…HCQR. Asn-164 and Asn-192 each carry an N-linked (GlcNAc...) asparagine glycan. The Fibrinogen C-terminal domain occupies 269–489; that stretch reads DKPSGPWRDC…KVVMMIRPNP (221 aa). 2 disulfide bridges follow: Cys-278–Cys-307 and Cys-430–Cys-443.

N-glycosylated. In terms of tissue distribution, widely expressed in heart, small intestine, spleen and stomach. Also found in lower levels in colon, ovary, adrenal gland, skeletal muscle and in prostate.

The protein localises to the secreted. Functionally, induces sprouting in endothelial cells through an autocrine and paracrine action. The sequence is that of Angiopoietin-related protein 2 (ANGPTL2) from Homo sapiens (Human).